The chain runs to 691 residues: DNA ligase (691 aa).

NAD(+) contacts are provided by residues aspartate 41–aspartate 45, serine 90–leucine 91, and glutamate 130. Lysine 132 acts as the N6-AMP-lysine intermediate in catalysis. NAD(+) contacts are provided by arginine 153, glutamate 190, lysine 307, and lysine 331. Zn(2+) contacts are provided by cysteine 425, cysteine 428, cysteine 443, and cysteine 449. In terms of domain architecture, BRCT spans alanine 610–proline 691.

Belongs to the NAD-dependent DNA ligase family. LigA subfamily. It depends on Mg(2+) as a cofactor. Mn(2+) serves as cofactor.

It carries out the reaction NAD(+) + (deoxyribonucleotide)n-3'-hydroxyl + 5'-phospho-(deoxyribonucleotide)m = (deoxyribonucleotide)n+m + AMP + beta-nicotinamide D-nucleotide.. In terms of biological role, DNA ligase that catalyzes the formation of phosphodiester linkages between 5'-phosphoryl and 3'-hydroxyl groups in double-stranded DNA using NAD as a coenzyme and as the energy source for the reaction. It is essential for DNA replication and repair of damaged DNA. The polypeptide is DNA ligase (Burkholderia ambifaria (strain MC40-6)).